The sequence spans 251 residues: Putative deaminase AgaI (251 aa).

Residue aspartate 86 is the Proton acceptor; for enolization step of the active site. The For ring-opening step role is filled by asparagine 154. Catalysis depends on histidine 156, which acts as the Proton acceptor; for ring-opening step. The active-site For ring-opening step is glutamate 161.

It belongs to the glucosamine/galactosamine-6-phosphate isomerase family.

This is Putative deaminase AgaI (agaI) from Escherichia coli (strain K12).